A 637-amino-acid polypeptide reads, in one-letter code: ATP-dependent zinc metalloprotease FtsH (637 aa).

Topologically, residues 1-6 are cytoplasmic; the sequence is MNNQGR. A helical transmembrane segment spans residues 7 to 27; sequence SILAWATLFIFVILLFNVFQS. The Periplasmic portion of the chain corresponds to 28 to 103; it reads DSLLGGRNNI…VVPLETRMNT (76 aa). The chain crosses the membrane as a helical span at residues 104 to 124; that stretch reads FLGFLISWFPMLLLIGVWVFF. The Cytoplasmic segment spans residues 125–637; the sequence is MRQMHGGGKA…TKAKKENYAS (513 aa). 195–202 contacts ATP; that stretch reads GPPGTGKT. Residue histidine 417 participates in Zn(2+) binding. The active site involves glutamate 418. Residues histidine 421 and aspartate 495 each contribute to the Zn(2+) site. The interval 603–637 is disordered; sequence ENKFPFNDSSTIKIDKEKSPEKTKTTKAKKENYAS. Basic and acidic residues predominate over residues 615–637; sequence KIDKEKSPEKTKTTKAKKENYAS.

The protein in the central section; belongs to the AAA ATPase family. In the C-terminal section; belongs to the peptidase M41 family. As to quaternary structure, homohexamer. The cofactor is Zn(2+).

Its subcellular location is the cell inner membrane. Its function is as follows. Acts as a processive, ATP-dependent zinc metallopeptidase for both cytoplasmic and membrane proteins. Plays a role in the quality control of integral membrane proteins. In Rickettsia conorii (strain ATCC VR-613 / Malish 7), this protein is ATP-dependent zinc metalloprotease FtsH.